Consider the following 573-residue polypeptide: Arylsulfatase I (573 aa).

The signal sequence occupies residues 1 to 23; sequence MHALTGLSLVSLLSFGYLSWDWA. Residues aspartate 56, aspartate 57, and cysteine 94 each coordinate Ca(2+). The active-site Nucleophile is cysteine 94. A 3-oxoalanine (Cys) modification is found at cysteine 94. Lysine 148 contributes to the substrate binding site. Histidine 150 is a catalytic residue. Position 240 (histidine 240) interacts with substrate. 2 N-linked (GlcNAc...) asparagine glycosylation sites follow: asparagine 277 and asparagine 289. Ca(2+) is bound by residues aspartate 298 and asparagine 299. Lysine 316 is a substrate binding site. 2 N-linked (GlcNAc...) asparagine glycosylation sites follow: asparagine 467 and asparagine 497. The tract at residues 516 to 550 is disordered; it reads FNGGAWGPWASDEEEEEEEEEAGRARSFSRGRRKK. A compositionally biased stretch (acidic residues) spans 526–536; that stretch reads SDEEEEEEEEE.

It belongs to the sulfatase family. It depends on Ca(2+) as a cofactor. Post-translationally, the oxidation of Cys-94 residue to 3-oxoalanine (also known as C(alpha)-formylglycine) by SUMF1/Sulfatase-modifying factor 1, seems critical for catalytic activity.

The protein resides in the secreted. It is found in the endoplasmic reticulum. Displays arylsulfatase activity at neutral pH, when co-expressed with SUMF1; arylsulfatase activity is measured in the secretion medium of retinal cell line, but no activity is recorded when measured in cell extracts. The chain is Arylsulfatase I (ARSI) from Canis lupus familiaris (Dog).